Here is a 532-residue protein sequence, read N- to C-terminus: Zinc finger protein ZIC 2 (532 aa).

Residues 100–255 (PHAAHVGSYS…YMRQQCIKQE (156 aa)) form a necessary for interaction with MDFIC and transcriptional activation or repression region. Phosphoserine occurs at positions 191 and 199. Residue Lys-253 forms a Glycyl lysine isopeptide (Lys-Gly) (interchain with G-Cter in SUMO2) linkage. Residues 256–291 (LICKWIDPEQLSNPKKSCNKTFSTMHELVTHVSVEH) form a C2H2-type 1; atypical zinc finger. A C2H2-type 2; atypical zinc finger spans residues 300 to 327 (HVCFWEECPREGKPFKAKYKLVNHIRVH). 3 consecutive C2H2-type zinc fingers follow at residues 333 to 357 (FPCP…KRTH), 363 to 387 (FQCE…MHVH), and 393 to 415 (YLCK…MKVH). 2 disordered regions span residues 406–452 (SSLR…SSSN) and 475–532 (HRGG…EWYV). The segment covering 417–435 (SSPQGSESSPAASSGYESS) has biased composition (low complexity). Residues 476–521 (RGGGSGSGGAGGGSGGGSGSGGGGGGAGGGGGGSSGGGSGTAGGHS) are compositionally biased toward gly residues. Positions 523 to 532 (LSSNFNEWYV) are enriched in polar residues.

The protein belongs to the GLI C2H2-type zinc-finger protein family. In terms of assembly, interacts with RNF180. Interacts (via the C2H2-type domains 3, 4 and 5) with MDFIC (via the C2H2-type domains 3, 4 and 5); the interaction reduces its transcriptional activity. Interacts with GLI1 and GLI2. Interacts (via C2H2-type domain 3) with DHX9. Phosphorylated. In terms of processing, ubiquitinated by RNF180, leading to its degradation.

The protein localises to the nucleus. It localises to the cytoplasm. Functionally, acts as a transcriptional activator or repressor. Plays important roles in the early stage of organogenesis of the CNS. Activates the transcription of the serotonin transporter SERT in uncrossed ipsilateral retinal ganglion cells (iRGCs) to refine eye-specific projections in primary visual targets. Its transcriptional activity is repressed by MDFIC. Involved in the formation of the ipsilateral retinal projection at the optic chiasm midline. Drives the expression of EPHB1 on ipsilaterally projecting growth cones. Binds to the minimal GLI-consensus sequence 5'-TGGGTGGTC-3'. Associates to the basal SERT promoter region from ventrotemporal retinal segments of retinal embryos. This Homo sapiens (Human) protein is Zinc finger protein ZIC 2 (ZIC2).